Here is a 76-residue protein sequence, read N- to C-terminus: Alpha/kappa-conotoxin-like fe14.1 (76 aa).

The first 24 residues, 1–24, serve as a signal peptide directing secretion; that stretch reads MPSVRSVTCCCLLWMMLSVQLVTP. A propeptide spanning residues 25-39 is cleaved from the precursor; it reads GSPGTAQLSGHRTAR. Intrachain disulfides connect Cys46–Cys61 and Cys50–Cys63. Residue Arg64 is modified to Arginine amide. A propeptide spanning residues 65 to 76 is cleaved from the precursor; the sequence is GKRDVVSSSMAV.

This sequence belongs to the conotoxin J superfamily. Expressed by the venom duct.

The protein localises to the secreted. Functionally, highly inhibits both nicotinic acetylcholine receptors (neuronal (alpha-3/beta-4) and muscular (alpha-1/beta-1/epsilon/delta) subtypes) and the voltage-gated potassium channel Kv1.6/KCNA6 subtype. The polypeptide is Alpha/kappa-conotoxin-like fe14.1 (Conus ferrugineus (Cone snail)).